The following is a 228-amino-acid chain: Ribulose-phosphate 3-epimerase, cytoplasmic isoform (228 aa).

Ser12 is a binding site for substrate. A divalent metal cation-binding residues include His37, Asp39, and His70. Catalysis depends on Asp39, which acts as the Proton acceptor. Residues His70, 150-153 (GFGG), 179-181 (DGG), and 201-202 (GS) each bind substrate. A divalent metal cation is bound at residue Asp179. Residue Asp179 is the Proton donor of the active site.

The protein belongs to the ribulose-phosphate 3-epimerase family. In terms of assembly, homodimer. The cofactor is Co(2+). Fe(2+) is required as a cofactor. Mn(2+) serves as cofactor. It depends on Zn(2+) as a cofactor. Predominantly accumulates in roots and seedlings.

The protein localises to the cytoplasm. The catalysed reaction is D-ribulose 5-phosphate = D-xylulose 5-phosphate. The protein operates within carbohydrate degradation; pentose phosphate pathway; D-xylulose 5-phosphate from D-ribulose 5-phosphate (non-oxidative stage): step 1/1. Functionally, catalyzes the reversible epimerization of D-ribulose 5-phosphate to D-xylulose 5-phosphate. This is Ribulose-phosphate 3-epimerase, cytoplasmic isoform from Oryza sativa subsp. japonica (Rice).